The sequence spans 161 residues: Putative pre-16S rRNA nuclease (161 aa).

It belongs to the YqgF nuclease family.

Its subcellular location is the cytoplasm. In terms of biological role, could be a nuclease involved in processing of the 5'-end of pre-16S rRNA. The polypeptide is Putative pre-16S rRNA nuclease (Bradyrhizobium sp. (strain ORS 278)).